The following is a 571-amino-acid chain: Phosphoenolpyruvate-protein phosphotransferase (571 aa).

The active-site Tele-phosphohistidine intermediate is histidine 189. Residues arginine 296 and arginine 332 each contribute to the phosphoenolpyruvate site. Mg(2+) contacts are provided by glutamate 431 and aspartate 455. Residues 454-455 and arginine 465 contribute to the phosphoenolpyruvate site; that span reads ND. Cysteine 502 serves as the catalytic Proton donor.

This sequence belongs to the PEP-utilizing enzyme family. In terms of assembly, homodimer. Requires Mg(2+) as cofactor.

It is found in the cytoplasm. It catalyses the reaction L-histidyl-[protein] + phosphoenolpyruvate = N(pros)-phospho-L-histidyl-[protein] + pyruvate. General (non sugar-specific) component of the phosphoenolpyruvate-dependent sugar phosphotransferase system (sugar PTS). This major carbohydrate active-transport system catalyzes the phosphorylation of incoming sugar substrates concomitantly with their translocation across the cell membrane. Enzyme I transfers the phosphoryl group from phosphoenolpyruvate (PEP) to the phosphoryl carrier protein (HPr). This is Phosphoenolpyruvate-protein phosphotransferase (ptsI) from Buchnera aphidicola subsp. Acyrthosiphon pisum (strain APS) (Acyrthosiphon pisum symbiotic bacterium).